Here is a 549-residue protein sequence, read N- to C-terminus: Glucose-6-phosphate isomerase (549 aa).

Catalysis depends on Glu355, which acts as the Proton donor. Residues His386 and Lys514 contribute to the active site.

The protein belongs to the GPI family.

It is found in the cytoplasm. It catalyses the reaction alpha-D-glucose 6-phosphate = beta-D-fructose 6-phosphate. It functions in the pathway carbohydrate biosynthesis; gluconeogenesis. The protein operates within carbohydrate degradation; glycolysis; D-glyceraldehyde 3-phosphate and glycerone phosphate from D-glucose: step 2/4. Catalyzes the reversible isomerization of glucose-6-phosphate to fructose-6-phosphate. This is Glucose-6-phosphate isomerase from Desulfatibacillum aliphaticivorans.